Consider the following 132-residue polypeptide: Intraflagellar transport protein 20 homolog (132 aa).

The interval 70–132 is IFT57-binding; sequence MKAIGARNLL…EFIDQFIFQK (63 aa). Residues 74–114 adopt a coiled-coil conformation; the sequence is GARNLLKSIAKQREAQQQQLQALIAEKKMQLERYRVEYEAL.

As to quaternary structure, component of the IFT complex B, at least composed of IFT20, IFT22, IFT25, IFT27, IFT46, IFT52, TRAF3IP1/IFT54, IFT57, IFT74, IFT80, IFT81, and IFT88. Interacts directly with IFT57 and KIF3B/Kinesin II subunit. Interacts with IFT88. Interacts with CEP83. Interacts with SPEF2 (via C-terminus). Interacts with CBL and CBLB. Interacts with TRIP11. Interacts with TTC21A. Interacts with SPATA1. Interacts with USH1G. Interacts with CCDC146. Interacts with CEP78; regulating IFT20 stability and localization. As to expression, expressed in almost all tissues.

The protein localises to the golgi apparatus. The protein resides in the cis-Golgi network. Its subcellular location is the cytoplasm. It localises to the cytoskeleton. It is found in the microtubule organizing center. The protein localises to the centrosome. The protein resides in the centriole. Its subcellular location is the cilium basal body. It localises to the cell projection. It is found in the cilium. The protein localises to the cytoplasmic vesicle. The protein resides in the secretory vesicle. Its subcellular location is the acrosome. Part of intraflagellar transport (IFT) particles involved in ciliary process assembly. May play a role in the trafficking of ciliary membrane proteins from the Golgi complex to the cilium. Regulates the platelet-derived growth factor receptor-alpha (PDGFRA) signaling pathway. Required for protein stability of E3 ubiquitin ligases CBL and CBLB that mediate ubiquitination and internalization of PDGFRA for proper feedback inhibition of PDGFRA signaling. Essential for male fertility. Plays an important role in spermatogenesis, particularly spermiogenesis, when germ cells form flagella. May play a role in the transport of flagellar proteins ODF2 and SPAG16 to build sperm flagella and in the removal of redundant sperm cytoplasm. Also involved in autophagy since it is required for trafficking of ATG16L and the expansion of the autophagic compartment. The protein is Intraflagellar transport protein 20 homolog (IFT20) of Homo sapiens (Human).